The sequence spans 426 residues: Histidine--tRNA ligase (426 aa).

It belongs to the class-II aminoacyl-tRNA synthetase family. Homodimer.

The protein resides in the cytoplasm. The catalysed reaction is tRNA(His) + L-histidine + ATP = L-histidyl-tRNA(His) + AMP + diphosphate + H(+). The sequence is that of Histidine--tRNA ligase from Lactiplantibacillus plantarum (strain ATCC BAA-793 / NCIMB 8826 / WCFS1) (Lactobacillus plantarum).